The chain runs to 506 residues: Maturase K (506 aa).

This sequence belongs to the intron maturase 2 family. MatK subfamily.

It is found in the plastid. Its subcellular location is the chloroplast. In terms of biological role, usually encoded in the trnK tRNA gene intron. Probably assists in splicing its own and other chloroplast group II introns. The chain is Maturase K from Rhododendron hippophaeoides (Rhododendron).